We begin with the raw amino-acid sequence, 200 residues long: Diadenylate cyclase (200 aa).

A helical transmembrane segment spans residues I5–A25. One can recognise a DAC domain in the interval N28–N185.

It belongs to the adenylate cyclase family. DacB/CdaS subfamily. Probably oligomerizes.

It localises to the cell membrane. The enzyme catalyses 2 ATP = 3',3'-c-di-AMP + 2 diphosphate. Functionally, catalyzes the condensation of 2 ATP molecules into cyclic di-AMP (c-di-AMP), a second messenger used to regulate differing processes in different bacteria. This chain is Diadenylate cyclase, found in Mycoplasma genitalium (strain ATCC 33530 / DSM 19775 / NCTC 10195 / G37) (Mycoplasmoides genitalium).